A 795-amino-acid chain; its full sequence is Lon protease (795 aa).

The region spanning 17-214 is the Lon N-terminal domain; that stretch reads YPLMPLRDIV…KVYKFLQDEI (198 aa). 370-377 contributes to the ATP binding site; sequence GPPGVGKT. The region spanning 605 to 787 is the Lon proteolytic domain; the sequence is KPLVGVATGL…EEVFKIALVR (183 aa). Residues Ser692 and Lys735 contribute to the active site.

It belongs to the peptidase S16 family. In terms of assembly, homohexamer. Organized in a ring with a central cavity.

Its subcellular location is the cytoplasm. It carries out the reaction Hydrolysis of proteins in presence of ATP.. Functionally, ATP-dependent serine protease that mediates the selective degradation of mutant and abnormal proteins as well as certain short-lived regulatory proteins. Required for cellular homeostasis and for survival from DNA damage and developmental changes induced by stress. Degrades polypeptides processively to yield small peptide fragments that are 5 to 10 amino acids long. Binds to DNA in a double-stranded, site-specific manner. This chain is Lon protease, found in Aquifex aeolicus (strain VF5).